We begin with the raw amino-acid sequence, 496 residues long: ATP synthase subunit beta, chloroplastic (496 aa).

Residue 170–177 coordinates ATP; the sequence is GGAGVGKT.

It belongs to the ATPase alpha/beta chains family. In terms of assembly, F-type ATPases have 2 components, CF(1) - the catalytic core - and CF(0) - the membrane proton channel. CF(1) has five subunits: alpha(3), beta(3), gamma(1), delta(1), epsilon(1). CF(0) has four main subunits: a(1), b(1), b'(1) and c(9-12).

Its subcellular location is the plastid. The protein resides in the chloroplast thylakoid membrane. It catalyses the reaction ATP + H2O + 4 H(+)(in) = ADP + phosphate + 5 H(+)(out). Produces ATP from ADP in the presence of a proton gradient across the membrane. The catalytic sites are hosted primarily by the beta subunits. This is ATP synthase subunit beta, chloroplastic from Dioscorea elephantipes (Elephant's foot yam).